Consider the following 233-residue polypeptide: Uracil-DNA glycosylase (233 aa).

Catalysis depends on Asp70, which acts as the Proton acceptor.

It belongs to the uracil-DNA glycosylase (UDG) superfamily. UNG family.

Its subcellular location is the cytoplasm. The enzyme catalyses Hydrolyzes single-stranded DNA or mismatched double-stranded DNA and polynucleotides, releasing free uracil.. In terms of biological role, excises uracil residues from the DNA which can arise as a result of misincorporation of dUMP residues by DNA polymerase or due to deamination of cytosine. This chain is Uracil-DNA glycosylase, found in Helicobacter pylori (strain HPAG1).